The chain runs to 336 residues: UDP-3-O-acylglucosamine N-acyltransferase (336 aa).

The active-site Proton acceptor is His-236.

The protein belongs to the transferase hexapeptide repeat family. LpxD subfamily. As to quaternary structure, homotrimer.

It catalyses the reaction a UDP-3-O-[(3R)-3-hydroxyacyl]-alpha-D-glucosamine + a (3R)-hydroxyacyl-[ACP] = a UDP-2-N,3-O-bis[(3R)-3-hydroxyacyl]-alpha-D-glucosamine + holo-[ACP] + H(+). It participates in bacterial outer membrane biogenesis; LPS lipid A biosynthesis. Its function is as follows. Catalyzes the N-acylation of UDP-3-O-acylglucosamine using 3-hydroxyacyl-ACP as the acyl donor. Is involved in the biosynthesis of lipid A, a phosphorylated glycolipid that anchors the lipopolysaccharide to the outer membrane of the cell. This is UDP-3-O-acylglucosamine N-acyltransferase from Aromatoleum aromaticum (strain DSM 19018 / LMG 30748 / EbN1) (Azoarcus sp. (strain EbN1)).